We begin with the raw amino-acid sequence, 366 residues long: Peptide chain release factor 1 (366 aa).

N5-methylglutamine is present on glutamine 239.

The protein belongs to the prokaryotic/mitochondrial release factor family. In terms of processing, methylated by PrmC. Methylation increases the termination efficiency of RF1.

Its subcellular location is the cytoplasm. In terms of biological role, peptide chain release factor 1 directs the termination of translation in response to the peptide chain termination codons UAG and UAA. The protein is Peptide chain release factor 1 of Albidiferax ferrireducens (strain ATCC BAA-621 / DSM 15236 / T118) (Rhodoferax ferrireducens).